The sequence spans 279 residues: Acyl-coenzyme A thioesterase MBLAC2 (279 aa).

Ser-2 is modified (N-acetylserine). His-83, His-85, Asp-87, His-88, His-170, Asp-189, and His-231 together coordinate Zn(2+). Cys-254 carries S-palmitoyl cysteine lipidation.

This sequence belongs to the metallo-beta-lactamase superfamily. Glyoxalase II family. It depends on Zn(2+) as a cofactor. Post-translationally, palmitoylated on Cys-254 by ZDHHC20.

It is found in the endoplasmic reticulum membrane. The protein localises to the cell membrane. The catalysed reaction is hexadecanoyl-CoA + H2O = hexadecanoate + CoA + H(+). It carries out the reaction dodecanoyl-CoA + H2O = dodecanoate + CoA + H(+). It catalyses the reaction tetradecanoyl-CoA + H2O = tetradecanoate + CoA + H(+). The enzyme catalyses octadecanoyl-CoA + H2O = octadecanoate + CoA + H(+). The catalysed reaction is a beta-lactam + H2O = a substituted beta-amino acid. Acyl-CoA thioesterases are a group of enzymes that catalyze the hydrolysis of acyl-CoAs to the free fatty acid and coenzyme A (CoASH), providing the potential to regulate intracellular levels of acyl-CoAs, free fatty acids and CoASH. Has an acyl-CoA thioesterase activity towards the long chain fatty acyl-CoA thioester palmitoyl-CoA (hexadecanoyl-CoA; C16:0-CoA). Displays a substrate preference for fatty acyl-CoAs with chain-lengths C12-C18. This is Acyl-coenzyme A thioesterase MBLAC2 (MBLAC2) from Bos taurus (Bovine).